The sequence spans 360 residues: Histidinol-phosphate aminotransferase (360 aa).

Residue lysine 223 is modified to N6-(pyridoxal phosphate)lysine.

It belongs to the class-II pyridoxal-phosphate-dependent aminotransferase family. Histidinol-phosphate aminotransferase subfamily. In terms of assembly, homodimer. Requires pyridoxal 5'-phosphate as cofactor.

It catalyses the reaction L-histidinol phosphate + 2-oxoglutarate = 3-(imidazol-4-yl)-2-oxopropyl phosphate + L-glutamate. It participates in amino-acid biosynthesis; L-histidine biosynthesis; L-histidine from 5-phospho-alpha-D-ribose 1-diphosphate: step 7/9. This is Histidinol-phosphate aminotransferase from Bacillus velezensis (strain DSM 23117 / BGSC 10A6 / LMG 26770 / FZB42) (Bacillus amyloliquefaciens subsp. plantarum).